We begin with the raw amino-acid sequence, 260 residues long: Late transcription factor 1 (260 aa).

Belongs to the chordopoxvirinae VLTF-1 family. As to quaternary structure, interacts with the late transcription factors VLTF-2 and VLTF-3. Interacts with the late transcription elongation factor VLTF-4. Interacts with itself.

Associates with RNA polymerase to initiate transcription from late gene promoters. The sequence is that of Late transcription factor 1 (OPG093) from Vaccinia virus (strain Ankara) (VACV).